The primary structure comprises 369 residues: Pulmonary surfactant-associated protein D (369 aa).

Positions 1 to 20 (MLLLPLSVLLLLTQPWRSLG) are cleaved as a signal peptide. 2 positions are modified to S-nitrosocysteine: C35 and C40. The disordered stretch occupies residues 41-215 (SPPEDGLPGR…ERGAKGESGL (175 aa)). The region spanning 46–216 (GLPGRDGRDG…RGAKGESGLA (171 aa)) is the Collagen-like domain. Basic and acidic residues predominate over residues 47 to 65 (LPGRDGRDGREGPRGEKGD). Position 78 is a 4-hydroxyproline (P78). K87 carries the 5-hydroxylysine modification. N90 carries an N-linked (GlcNAc...) asparagine glycan. P96 carries the post-translational modification 4-hydroxyproline. K99 bears the 5-hydroxylysine mark. Gly residues predominate over residues 139–148 (GPKGGVGAPG). 4-hydroxyproline is present on residues P165 and P171. A compositionally biased stretch (low complexity) spans 165–191 (PGEPGAPGRAGAPGPAGAIGPQGPSGA). The segment covering 198 to 210 (KGDRGTPGERGAK) has biased composition (basic and acidic residues). Residues 217 to 248 (EVNALRQRVGILEGQLQRLQNAFSQYKKAMLF) adopt a coiled-coil conformation. Residues 254 to 369 (VGEKIFKTEG…GEQRLVICEF (116 aa)) form the C-type lectin domain. Disulfide bonds link C275–C367 and C345–C359.

It belongs to the SFTPD family. As to quaternary structure, oligomeric complex of 4 set of homotrimers. Hydroxylation on proline residues within the sequence motif, GXPG, is most likely to be 4-hydroxy as this fits the requirement for 4-hydroxylation in vertebrates. In terms of processing, S-nitrosylation at Cys-35 and Cys-40 alters the quaternary structure which results in a pro-inflammatory chemoattractive signaling activity with macrophages.

The protein localises to the secreted. The protein resides in the extracellular space. It is found in the extracellular matrix. It localises to the surface film. Contributes to the lung's defense against inhaled microorganisms, organic antigens and toxins. Interacts with compounds such as bacterial lipopolysaccharides, oligosaccharides and fatty acids and modulates leukocyte action in immune response. May participate in the extracellular reorganization or turnover of pulmonary surfactant. Binds strongly maltose residues and to a lesser extent other alpha-glucosyl moieties. This Bos taurus (Bovine) protein is Pulmonary surfactant-associated protein D (SFTPD).